The following is a 512-amino-acid chain: 2,3-bisphosphoglycerate-independent phosphoglycerate mutase (512 aa).

2 residues coordinate Mn(2+): aspartate 11 and serine 61. Serine 61 functions as the Phosphoserine intermediate in the catalytic mechanism. Residues histidine 122, 152–153, arginine 184, arginine 190, 259–262, and lysine 332 contribute to the substrate site; these read RD and RADR. Mn(2+) contacts are provided by aspartate 399, histidine 403, aspartate 440, histidine 441, and histidine 459.

The protein belongs to the BPG-independent phosphoglycerate mutase family. Monomer. It depends on Mn(2+) as a cofactor.

The catalysed reaction is (2R)-2-phosphoglycerate = (2R)-3-phosphoglycerate. Its pathway is carbohydrate degradation; glycolysis; pyruvate from D-glyceraldehyde 3-phosphate: step 3/5. Catalyzes the interconversion of 2-phosphoglycerate and 3-phosphoglycerate. This Francisella tularensis subsp. novicida (strain U112) protein is 2,3-bisphosphoglycerate-independent phosphoglycerate mutase.